Reading from the N-terminus, the 632-residue chain is PTS system mannitol-specific EIICBA component (632 aa).

Residues 12 to 341 (FGRFLSNMIM…ILLKYDFNTI (330 aa)) enclose the PTS EIIC type-2 domain. The next 6 helical transmembrane spans lie at 24-45 (ISIFIAWGMMNALFMPLGWQPN), 50-70 (QLISPMIFYLLPILIGYTGGS), 134-155 (SLAILGILLAIISFFTIGPFIE), 165-185 (IQIILSYNLLPLTSIIIEPAK), 273-292 (LILGGMSGIFILVLLHGGLI), and 313-334 (FSNIISVACSFLVSFISSSILL). The PTS EIIB type-2 domain occupies 374 to 469 (KTIIVACDAG…KLVENMVFLY (96 aa)). Residue C380 is the Phosphocysteine intermediate; for EIIB activity of the active site. C380 is subject to Phosphocysteine; by EIIA. The PTS EIIA type-2 domain maps to 488–630 (FQLNEENIIL…KEALSLLTME (143 aa)). H548 functions as the Tele-phosphohistidine intermediate; for EIIA activity in the catalytic mechanism. Residue H548 is modified to Phosphohistidine; by HPr.

In terms of assembly, homodimer. Post-translationally, an intramolecular phosphotransfer takes places between His-548 and Cys-380.

It is found in the cell inner membrane. The enzyme catalyses D-mannitol(out) + N(pros)-phospho-L-histidyl-[protein] = D-mannitol 1-phosphate(in) + L-histidyl-[protein]. Its function is as follows. The phosphoenolpyruvate-dependent sugar phosphotransferase system (sugar PTS), a major carbohydrate active transport system, catalyzes the phosphorylation of incoming sugar substrates concomitantly with their translocation across the cell membrane. This system is involved in D-mannitol transport. The protein is PTS system mannitol-specific EIICBA component (mtlA) of Buchnera aphidicola subsp. Acyrthosiphon pisum (strain APS) (Acyrthosiphon pisum symbiotic bacterium).